The sequence spans 315 residues: Methionyl-tRNA formyltransferase (315 aa).

115–118 (SLLP) is a binding site for (6S)-5,6,7,8-tetrahydrofolate.

It belongs to the Fmt family.

The catalysed reaction is L-methionyl-tRNA(fMet) + (6R)-10-formyltetrahydrofolate = N-formyl-L-methionyl-tRNA(fMet) + (6S)-5,6,7,8-tetrahydrofolate + H(+). Attaches a formyl group to the free amino group of methionyl-tRNA(fMet). The formyl group appears to play a dual role in the initiator identity of N-formylmethionyl-tRNA by promoting its recognition by IF2 and preventing the misappropriation of this tRNA by the elongation apparatus. This Dehalococcoides mccartyi (strain ATCC BAA-2100 / JCM 16839 / KCTC 5957 / BAV1) protein is Methionyl-tRNA formyltransferase.